Consider the following 217-residue polypeptide: Biotin transport regulator (217 aa).

The interval 14–49 (GDGLGNLAGRSADPTGAADKGESGVPVPPTGFVDPT) is disordered.

In terms of biological role, may be part of a system that R.meliloti uses to respond to plant (alfalfa) biotin signals. The sequence is that of Biotin transport regulator (bioS) from Rhizobium meliloti (strain 1021) (Ensifer meliloti).